A 116-amino-acid polypeptide reads, in one-letter code: Large ribosomal subunit protein uL18 (116 aa).

This sequence belongs to the universal ribosomal protein uL18 family. Part of the 50S ribosomal subunit; part of the 5S rRNA/L5/L18/L25 subcomplex. Contacts the 5S and 23S rRNAs.

Functionally, this is one of the proteins that bind and probably mediate the attachment of the 5S RNA into the large ribosomal subunit, where it forms part of the central protuberance. The polypeptide is Large ribosomal subunit protein uL18 (Shewanella denitrificans (strain OS217 / ATCC BAA-1090 / DSM 15013)).